A 72-amino-acid chain; its full sequence is Translation initiation factor IF-1 (72 aa).

The 72-residue stretch at 1-72 (MSKEENIEMQ…TKGRIIFRSR (72 aa)) folds into the S1-like domain.

It belongs to the IF-1 family. In terms of assembly, component of the 30S ribosomal translation pre-initiation complex which assembles on the 30S ribosome in the order IF-2 and IF-3, IF-1 and N-formylmethionyl-tRNA(fMet); mRNA recruitment can occur at any time during PIC assembly.

The protein localises to the cytoplasm. One of the essential components for the initiation of protein synthesis. Stabilizes the binding of IF-2 and IF-3 on the 30S subunit to which N-formylmethionyl-tRNA(fMet) subsequently binds. Helps modulate mRNA selection, yielding the 30S pre-initiation complex (PIC). Upon addition of the 50S ribosomal subunit IF-1, IF-2 and IF-3 are released leaving the mature 70S translation initiation complex. The sequence is that of Translation initiation factor IF-1 from Buchnera aphidicola subsp. Acyrthosiphon pisum (strain APS) (Acyrthosiphon pisum symbiotic bacterium).